The primary structure comprises 352 residues: Zinc finger protein 185 (352 aa).

2 disordered regions span residues 1-73 (MTTE…ELQS) and 86-121 (DVLP…ITPP). Ser18 carries the phosphoserine modification. Positions 61-72 (KKTTSSPTQELQ) are enriched in polar residues. Thr137 carries the phosphothreonine modification. The span at 251 to 268 (VSSGKPVSSHCDSPSSIE) shows a compositional bias: polar residues. Residues 251–287 (VSSGKPVSSHCDSPSSIEDSLDLAKKPPHEGTPSERP) are disordered. Residues 272 to 287 (DLAKKPPHEGTPSERP) show a composition bias toward basic and acidic residues. Positions 292-347 (CTYCSHEIQDCPKITLEHLGICCHEYCFKCGICNKPMGDLLDQIFIHRDTIHCGKC) constitute an LIM zinc-binding domain.

In terms of tissue distribution, expressed in skin, kidney, ovary, testis. Also expressed in brain, cartilage, heart, lung, spleen and thymus.

The protein localises to the cytoplasm. It is found in the cytoskeleton. It localises to the cell junction. The protein resides in the focal adhesion. In terms of biological role, may be involved in the regulation of cellular proliferation and/or differentiation. The sequence is that of Zinc finger protein 185 (Znf185) from Mus musculus (Mouse).